The chain runs to 559 residues: Glucose-6-phosphate isomerase (559 aa).

Glutamate 352 serves as the catalytic Proton donor. Catalysis depends on residues histidine 383 and lysine 511.

It belongs to the GPI family.

It is found in the cytoplasm. The catalysed reaction is alpha-D-glucose 6-phosphate = beta-D-fructose 6-phosphate. It participates in carbohydrate biosynthesis; gluconeogenesis. Its pathway is carbohydrate degradation; glycolysis; D-glyceraldehyde 3-phosphate and glycerone phosphate from D-glucose: step 2/4. Its function is as follows. Catalyzes the reversible isomerization of glucose-6-phosphate to fructose-6-phosphate. The chain is Glucose-6-phosphate isomerase from Chlorobium phaeobacteroides (strain DSM 266 / SMG 266 / 2430).